The chain runs to 372 residues: L-selectin (372 aa).

Positions 1–28 (MVFPWRCQSAQRGSWSFLKLWIRTLLCC) are cleaved as a signal peptide. Positions 29-38 (DLLPHHGTHC) are excised as a propeptide. The Extracellular portion of the chain corresponds to 39–332 (WTYHYSERSM…FSKIKEGDYN (294 aa)). The C-type lectin domain occupies 55 to 155 (KFCKHNYTDL…ACHKRKAALC (101 aa)). Cystine bridges form between Cys-57–Cys-155, Cys-128–Cys-147, Cys-128–Cys-160, Cys-160–Cys-171, Cys-165–Cys-180, Cys-182–Cys-191, Cys-197–Cys-241, Cys-227–Cys-254, Cys-259–Cys-303, and Cys-289–Cys-316. Residues Asn-60 and Asn-104 are each glycosylated (N-linked (GlcNAc...) asparagine). Positions 118, 120, 126, 143, and 144 each coordinate Ca(2+). Positions 156-192 (YTASCQPESCNRHGECVETINNNTCICDPGYYGPQCQ) constitute an EGF-like domain. Asn-177 carries N-linked (GlcNAc...) asparagine glycosylation. Sushi domains follow at residues 195–256 (IQCE…ICQV) and 257–318 (IQCM…ICQK). Asn-226, Asn-246, and Asn-278 each carry an N-linked (GlcNAc...) asparagine glycan. A helical membrane pass occupies residues 333–355 (PLFIPVAVMVTAFSGLAFIIWLA). Over 356-372 (RRLKKGKKSQERMDDPY) the chain is Cytoplasmic.

This sequence belongs to the selectin/LECAM family. As to quaternary structure, interaction with SELPLG/PSGL1 and PODXL2 is required for promoting recruitment and rolling of leukocytes. This interaction is dependent on the sialyl Lewis X glycan modification of SELPLG and PODXL2, and tyrosine sulfation modifications of SELPLG. Sulfation on 'Tyr-51' of SELPLG is important for L-selectin binding. N-glycosylated. As to expression, expressed in peripheral blood mononuclear cells (PBMC), spleen and thymus.

The protein resides in the cell membrane. Functionally, calcium-dependent lectin that mediates cell adhesion by binding to glycoproteins on neighboring cells. Mediates the adherence of lymphocytes to endothelial cells of high endothelial venules in peripheral lymph nodes. Promotes initial tethering and rolling of leukocytes in endothelia. The chain is L-selectin (Sell) from Rattus norvegicus (Rat).